Consider the following 334-residue polypeptide: WD repeat domain 54 (334 aa).

3 WD repeats span residues 162–206 (GHQT…TLLT), 208–247 (IAGF…LHIQ), and 250–289 (AHAR…ESGS).

In terms of assembly, homodimer and homotrimer; forms tight forms of dimers and trimers. Interacts with IZUMO1 and IZUMO1R/JUNO. Cross-linked to tightly form both dimers and trimers by TGM2. Cross-linking enhances the activation of EGF receptor-mediated signaling pathway. Cross-linking is inhibited by EGF. In terms of processing, ubiquitinated. EGF increases ubiquitination. As to expression, widely expressed in the ovary and testis (at protein level).

The protein resides in the vesicle. It localises to the cytoplasm. It is found in the cell membrane. Its function is as follows. Plays a role in the adhesion and fusion of the sperm-oocyte membrane through its interactions with IZUMO1 and IZUMO1R/JUNO. When cross-linked to form dimers and trimers, it has a regulatory effect on ERK signaling pathway activity in response to EGF stimulation. Colocalizes with the EGF receptor in WDR54-specific vesicle where it sustains the internalization and controls the degradation of the EGF receptor after EGF stimulation. The sequence is that of WD repeat domain 54 (Wdr54) from Rattus norvegicus (Rat).